We begin with the raw amino-acid sequence, 292 residues long: Protoheme IX farnesyltransferase (292 aa).

9 helical membrane passes run 11 to 31 (FGIVVFSVLAGLAGYATGFQI), 37 to 57 (WKIFLETLLGIYFLSSGSLAL), 85 to 105 (AAAGILSVGLLLVGMNMLFKL), 108 to 128 (VAGWVGLFCVFLYNGPYTLWW), 133 to 153 (VFAAVPGAIPGALPVTIGYAV), 163 to 183 (SLYLFLIMFLWQMPHFWVLAI), 199 to 219 (VALGMEKTMFQVGLYTLVYVG), 223 to 243 (AAPMFVHASWMFVLLTFPFVF), and 261 to 281 (WLAFFMWLNVSMLVFIIIPVI).

It belongs to the UbiA prenyltransferase family. Protoheme IX farnesyltransferase subfamily.

The protein localises to the cell inner membrane. The enzyme catalyses heme b + (2E,6E)-farnesyl diphosphate + H2O = Fe(II)-heme o + diphosphate. The protein operates within porphyrin-containing compound metabolism; heme O biosynthesis; heme O from protoheme: step 1/1. Its function is as follows. Converts heme B (protoheme IX) to heme O by substitution of the vinyl group on carbon 2 of heme B porphyrin ring with a hydroxyethyl farnesyl side group. The sequence is that of Protoheme IX farnesyltransferase from Bdellovibrio bacteriovorus (strain ATCC 15356 / DSM 50701 / NCIMB 9529 / HD100).